The following is a 345-amino-acid chain: N-acetyl-gamma-glutamyl-phosphate reductase (345 aa).

Residue Cys-149 is part of the active site.

It belongs to the NAGSA dehydrogenase family. Type 1 subfamily.

The protein localises to the cytoplasm. The enzyme catalyses N-acetyl-L-glutamate 5-semialdehyde + phosphate + NADP(+) = N-acetyl-L-glutamyl 5-phosphate + NADPH + H(+). The protein operates within amino-acid biosynthesis; L-arginine biosynthesis; N(2)-acetyl-L-ornithine from L-glutamate: step 3/4. In terms of biological role, catalyzes the NADPH-dependent reduction of N-acetyl-5-glutamyl phosphate to yield N-acetyl-L-glutamate 5-semialdehyde. In Janthinobacterium sp. (strain Marseille) (Minibacterium massiliensis), this protein is N-acetyl-gamma-glutamyl-phosphate reductase.